The following is a 954-amino-acid chain: Kinesin-like protein KIN-14Q (954 aa).

The region spanning 33–155 (AMRRYDAASW…CVLALKSFSE (123 aa)) is the Calponin-homology (CH) domain. The Kinesin motor domain occupies 374–699 (NIRVYCRVRP…LKFAERVASV (326 aa)). An ATP-binding site is contributed by 457–464 (GQTGSGKT). Residues 704–733 (AKANKEGSEVRELKEQIATLKAALAKKEGE) are a coiled coil. Residues 844-855 (YDPDKQRRRAEP) show a composition bias toward basic and acidic residues. 2 disordered regions span residues 844–876 (YDPD…DQEM) and 912–954 (PNLA…NTPK). A compositionally biased stretch (low complexity) spans 864-873 (FDAATSSPSD). The segment covering 928–954 (PIRNSKQLPFSTTGGRRTRNGKINTPK) has biased composition (polar residues).

It belongs to the TRAFAC class myosin-kinesin ATPase superfamily. Kinesin family. KIN-14 subfamily. As to quaternary structure, forms oligomers in vitro. Interacts with actin microfilaments. Binds to actin in vitro through its calponin-homology (CH) domain. As to expression, expressed in primary leaf, primary root, developing flower and coleoptile.

It is found in the cytoplasm. Its subcellular location is the cytoskeleton. The microtubule-dependent ATPase activity is regulated by actin binding. Functionally, minus end-directed motor protein that transports actin filaments along microtubules. Plays a central role in the polar orientation of actin filaments along microtubules, and thus a contribution to the organization of the cytoskeletal architecture. Links the actin microfilaments with the cortical microtubules in both cycling and non-cycling cells. Required for efficient cell elongation by its participation in the premitotic nuclear positioning. This chain is Kinesin-like protein KIN-14Q, found in Oryza sativa subsp. japonica (Rice).